A 155-amino-acid polypeptide reads, in one-letter code: Ribosomal RNA large subunit methyltransferase H (155 aa).

S-adenosyl-L-methionine is bound by residues leucine 72, glycine 103, and 122–127; that span reads LSPLTL.

This sequence belongs to the RNA methyltransferase RlmH family. In terms of assembly, homodimer.

It localises to the cytoplasm. The enzyme catalyses pseudouridine(1915) in 23S rRNA + S-adenosyl-L-methionine = N(3)-methylpseudouridine(1915) in 23S rRNA + S-adenosyl-L-homocysteine + H(+). Functionally, specifically methylates the pseudouridine at position 1915 (m3Psi1915) in 23S rRNA. In Haemophilus influenzae (strain PittEE), this protein is Ribosomal RNA large subunit methyltransferase H.